The sequence spans 731 residues: Penicillin-binding protein 2a (731 aa).

The Cytoplasmic portion of the chain corresponds to 1–56 (MKLDKLFEKFLSLFKKETSELEDSDSTILRRSRSDRKKLAQVGPIRKFWRRYHLTK). The helical; Signal-anchor for type II membrane protein transmembrane segment at 57–77 (IILILGLSAGLLVGIYLFAVA) threads the bilayer. A hydrophobic; associated with cytoplasmic membrane. Required for transglycosylase activity, but not for lipid II binding region spans residues 78–156 (KSTNVNDLQN…FLAIVTAGRS (79 aa)). Residues 78 to 300 (KSTNVNDLQN…SQLHDKYEGK (223 aa)) are transglycosylase. Over 78-731 (KSTNVNDLQN…IWDSIVNLFR (654 aa)) the chain is Extracellular. The active-site Proton donor; for transglycosylase activity is glutamate 131. A transpeptidase region spans residues 301–731 (ISDYRYPSYF…IWDSIVNLFR (431 aa)). The active-site Acyl-ester intermediate; for transpeptidase activity is serine 410. A disordered region spans residues 674–694 (ANTKRQVQTNDNSQTDDNLSD). A compositionally biased stretch (polar residues) spans 676–690 (TKRQVQTNDNSQTDD).

In the N-terminal section; belongs to the glycosyltransferase 51 family. The protein in the C-terminal section; belongs to the transpeptidase family. As to quaternary structure, homodimer. May also form higher order oligomers. Self-association may depend on its transmembrane and/or cytoplasmic regions. Interacts with MacP; interaction is required for the function of this protein.

Its subcellular location is the cell membrane. It localises to the secreted. It is found in the cell wall. The catalysed reaction is Preferential cleavage: (Ac)2-L-Lys-D-Ala-|-D-Ala. Also transpeptidation of peptidyl-alanyl moieties that are N-acyl substituents of D-alanine.. The enzyme catalyses [GlcNAc-(1-&gt;4)-Mur2Ac(oyl-L-Ala-gamma-D-Glu-L-Lys-D-Ala-D-Ala)](n)-di-trans,octa-cis-undecaprenyl diphosphate + beta-D-GlcNAc-(1-&gt;4)-Mur2Ac(oyl-L-Ala-gamma-D-Glu-L-Lys-D-Ala-D-Ala)-di-trans,octa-cis-undecaprenyl diphosphate = [GlcNAc-(1-&gt;4)-Mur2Ac(oyl-L-Ala-gamma-D-Glu-L-Lys-D-Ala-D-Ala)](n+1)-di-trans,octa-cis-undecaprenyl diphosphate + di-trans,octa-cis-undecaprenyl diphosphate + H(+). It participates in cell wall biogenesis; peptidoglycan biosynthesis. Cell wall formation. Synthesis of cross-linked peptidoglycan (PG) from the lipid intermediates. Binds dansylated lipid II and catalyzes the polymerization of glycan chains. Hydrolyzes S2d (N-benzoyl-D-alanylmercaptoacetic acid) molecule, a synthetic thiolester analog of cell wall stem peptide. Active against bocillin, a fluorescent penicillin. No transpeptidase activity with non-fluorescent lysine-containing lipid II as substrate. The chain is Penicillin-binding protein 2a from Streptococcus pneumoniae serotype 2 (strain D39 / NCTC 7466).